The following is a 1086-amino-acid chain: Formin-like protein 2 (1086 aa).

Glycine 2 is lipidated: N-myristoyl glycine. A GBD/FH3 domain is found at 23 to 469; that stretch reads LPMPEPGELE…EAIQRQSTLE (447 aa). At serine 188 the chain carries Phosphoserine. The interval 513–597 is disordered; it reads SVGPTMGAAS…APPLPSAPPL (85 aa). Positions 525–537 are enriched in pro residues; sequence PLPPPPPPLPPSS. Residues 538–547 are compositionally biased toward polar residues; the sequence is DTPETVQNGP. 2 stretches are compositionally biased toward pro residues: residues 548-576 and 583-597; these read VTPP…PLPG and PAPP…APPL. Positions 616–1007 constitute an FH2 domain; the sequence is IKKPIKTKFR…LMEKLLEQEA (392 aa). Residues 1040–1079 enclose the DAD domain; the sequence is NRHVYEGKDGAIEDIITVLKTVPFTARTAKRGSRFFCEPV.

It belongs to the formin homology family.

Its subcellular location is the cytoplasm. Functionally, plays a role in the regulation of cell morphology and cytoskeletal organization. Required in the cortical actin filament dynamics. This chain is Formin-like protein 2, found in Homo sapiens (Human).